A 258-amino-acid chain; its full sequence is UPF0246 protein mma_1385 (258 aa).

Belongs to the UPF0246 family.

The protein is UPF0246 protein mma_1385 of Janthinobacterium sp. (strain Marseille) (Minibacterium massiliensis).